Consider the following 627-residue polypeptide: Putative ankyrin repeat protein L122 (627 aa).

ANK repeat units follow at residues 61-94, 98-130, 153-186, 190-223, 228-259, 263-296, 300-333, 337-370, 374-407, 411-444, 448-480, and 491-523; these read KGWT…DVHI, KGRT…DINS, HACY…DPNI, YGKT…NANH, AETV…DINH, IGFT…NINL, DGFT…DIND, NNVT…DLEI, YDWT…NVNV, LGHT…NPNL, DKNT…DSNT, and REYN…NYSD.

This Acanthamoeba polyphaga (Amoeba) protein is Putative ankyrin repeat protein L122.